Reading from the N-terminus, the 277-residue chain is UPF0276 protein PP_2398 (277 aa).

The protein belongs to the UPF0276 family.

This is UPF0276 protein PP_2398 from Pseudomonas putida (strain ATCC 47054 / DSM 6125 / CFBP 8728 / NCIMB 11950 / KT2440).